A 254-amino-acid polypeptide reads, in one-letter code: Putative electron transfer flavoprotein subunit YdiQ (254 aa).

Belongs to the ETF beta-subunit/FixA family. In terms of assembly, ydiR and YdiQ form a heterodimer.

Its function is as follows. May play a role in a redox process. This Escherichia coli (strain K12) protein is Putative electron transfer flavoprotein subunit YdiQ (ydiQ).